We begin with the raw amino-acid sequence, 459 residues long: Cysteine--tRNA ligase (459 aa).

Cys28 is a binding site for Zn(2+). Positions 30 to 40 match the 'HIGH' region motif; that stretch reads VTVYDLCHIGH. The Zn(2+) site is built by Cys209, His234, and Glu238. The short motif at 266–270 is the 'KMSKS' region element; that stretch reads KMSKS. Lys269 provides a ligand contact to ATP.

It belongs to the class-I aminoacyl-tRNA synthetase family. Monomer. Zn(2+) serves as cofactor.

The protein localises to the cytoplasm. The enzyme catalyses tRNA(Cys) + L-cysteine + ATP = L-cysteinyl-tRNA(Cys) + AMP + diphosphate. The sequence is that of Cysteine--tRNA ligase from Haemophilus influenzae (strain 86-028NP).